The following is a 102-amino-acid chain: Putative toxin YafQ (102 aa).

This sequence belongs to the RelE toxin family. YafQ subfamily.

Functionally, toxic component of a type II toxin-antitoxin (TA) system. Its cognate antitoxin is RelB. This is Putative toxin YafQ from Haemophilus influenzae (strain ATCC 51907 / DSM 11121 / KW20 / Rd).